Consider the following 553-residue polypeptide: General alpha-glucoside permease (553 aa).

Residues 1 to 21 show a composition bias toward polar residues; that stretch reads MSVDENQLENGQLLSSENEAS. Positions 1 to 26 are disordered; sequence MSVDENQLENGQLLSSENEASSPFKE. At 1-33 the chain is on the cytoplasmic side; it reads MSVDENQLENGQLLSSENEASSPFKESIPSRSS. A helical membrane pass occupies residues 34–54; that stretch reads LYLIALTVSLLGVQLTWSVEL. Over 55–72 the chain is Extracellular; sequence GYGTPYLFSLGLRKEWTS. A helical membrane pass occupies residues 73–93; that stretch reads IIWIAGPLTGILIQPIAGILS. Over 94–111 the chain is Cytoplasmic; sequence DRVNSRIGRRRPFMLCAS. The helical transmembrane segment at 112-132 threads the bilayer; that stretch reads LLGTFSLFLMGWAPDICLFIF. Over 133 to 140 the chain is Extracellular; it reads SNEVLMKR. Residues 141-161 form a helical membrane-spanning segment; the sequence is VTIVLATISIYLLDVAVNVVM. Residues 162 to 186 lie on the Cytoplasmic side of the membrane; sequence ASTRSLIVDSVRSDQQHEANSWAGR. Residues 187 to 207 traverse the membrane as a helical segment; the sequence is MIGVGNVLGYLLGYLPLYRIF. Residues 208 to 216 are Extracellular-facing; it reads SFLNFTQLQ. Residues 217–237 form a helical membrane-spanning segment; that stretch reads VFCVLASISLVLTVTITTIFV. At 238–280 the chain is on the cytoplasmic side; the sequence is SERRFPPVEHEKSVAGEIFEFFTTMRQSITALPFTLKRICFVQ. Residues 281 to 301 traverse the membrane as a helical segment; it reads FFAYFGWFPFLFYITTYVGIL. The Extracellular portion of the chain corresponds to 302-322; sequence YLRHAPKGHEEDWDMATRQGS. A helical membrane pass occupies residues 323-343; that stretch reads FALLLFAIISLAANTALPLLL. At 344–424 the chain is on the cytoplasmic side; sequence EDTEDDEEDE…SKVQIKGLTL (81 aa). The interval 368 to 399 is disordered; that stretch reads NDLGNIRTGTNTPRLGNLSETTSFRSENEPSR. Polar residues predominate over residues 374 to 392; that stretch reads RTGTNTPRLGNLSETTSFR. Residues 425 to 445 form a helical membrane-spanning segment; sequence PILWLSSHVLFGVCMLSTIFL. At 446 to 452 the chain is on the extracellular side; sequence QTSWQAQ. A helical membrane pass occupies residues 453–473; it reads AMVAICGLSWACTLWIPYSLF. Residues 474–494 lie on the Cytoplasmic side of the membrane; it reads SSEIGKLGLRESSGKMIGVHN. Residues 495–515 form a helical membrane-spanning segment; sequence VFISAPQVLSTIIATIVFIQS. The Extracellular segment spans residues 516–521; it reads EGSHRD. Residues 522–542 form a helical membrane-spanning segment; the sequence is IADNSIAWVLRIGGISAFLAA. Over 543-553 the chain is Cytoplasmic; it reads YQCRHLLPINF.

It belongs to the glycoside-pentoside-hexuronide (GPH) cation symporter transporter (TC 2.A.2.4) family.

Its subcellular location is the membrane. Responsible for the transport of maltose and sucrose into the cell, with the concomitant uptake of protons (symport system). This chain is General alpha-glucoside permease (sut1), found in Schizosaccharomyces pombe (strain 972 / ATCC 24843) (Fission yeast).